The following is an 893-amino-acid chain: Zinc finger protein 281 (893 aa).

Disordered stretches follow at residues 1–113, 126–148, 153–172, and 198–251; these read MKIG…FPSQ, IKQE…HHHY, AGAE…SHGV, and SGSR…GAVL. A Glycyl lysine isopeptide (Lys-Gly) (interchain with G-Cter in SUMO2) cross-link involves residue lysine 2. Residues 7–36 show a composition bias toward gly residues; it reads FLSGGGGPSSSGGSGSGGSSGSASGGSGGG. Residues lysine 100 and lysine 127 each participate in a glycyl lysine isopeptide (Lys-Gly) (interchain with G-Cter in SUMO2) cross-link. Residues 127 to 139 show a composition bias toward basic and acidic residues; sequence KQEKPADPEEQPS. Positions 161–170 are enriched in gly residues; sequence GLGGGEGGSH. A compositionally biased stretch (basic and acidic residues) spans 201 to 216; it reads RTDEHGNQEPKQDANV. Residues lysine 211, lysine 217, lysine 223, lysine 230, lysine 240, and lysine 256 each participate in a glycyl lysine isopeptide (Lys-Gly) (interchain with G-Cter in SUMO2) cross-link. 3 consecutive C2H2-type zinc fingers follow at residues 258-280, 286-308, and 314-336; these read HICD…VLIH, FQCS…EKIH, and FGCD…KRTH. Residues lysine 298 and lysine 322 each participate in a glycyl lysine isopeptide (Lys-Gly) (interchain with G-Cter in SUMO2) cross-link. The C2H2-type 4; atypical zinc finger occupies 342–364; that stretch reads YKCDTCQQYFSRTDRLLKHRRTC. Lysine 370 is covalently cross-linked (Glycyl lysine isopeptide (Lys-Gly) (interchain with G-Cter in SUMO2)). A disordered region spans residues 371-425; that stretch reads GAASAEPGSSNHNSMGNLAVLSQGNTSSSRRKSKSKSIAIENKEHKTGKTNESQM. The segment covering 377 to 396 has biased composition (polar residues); that stretch reads PGSSNHNSMGNLAVLSQGNT. The residue at position 392 (serine 392) is a Phosphoserine. Glycyl lysine isopeptide (Lys-Gly) (interchain with G-Cter in SUMO2) cross-links involve residues lysine 406, lysine 413, lysine 457, and lysine 474. Position 481 is a phosphoserine (serine 481). Glycyl lysine isopeptide (Lys-Gly) (interchain with G-Cter in SUMO2) cross-links involve residues lysine 490, lysine 495, lysine 536, lysine 596, lysine 614, and lysine 619. Residues 613–658 form a disordered region; the sequence is GKSETQKEDPFNLTEPRVDLHTSGEHSELVQEENLSPGTQTPSNDK. Positions 616-641 are enriched in basic and acidic residues; that stretch reads ETQKEDPFNLTEPRVDLHTSGEHSEL. A compositionally biased stretch (polar residues) spans 645-658; it reads ENLSPGTQTPSNDK. Serine 648 is modified (phosphoserine). Residues lysine 658 and lysine 667 each participate in a glycyl lysine isopeptide (Lys-Gly) (interchain with G-Cter in SUMO2) cross-link. The segment covering 775 to 813 has biased composition (polar residues); sequence SSAFQSSSQKLTSQKEQQKNLESSTSFQIPSQELASQID. The disordered stretch occupies residues 775–815; sequence SSAFQSSSQKLTSQKEQQKNLESSTSFQIPSQELASQIDPQ. Serine 782 is modified (phosphoserine). Residues lysine 784, lysine 789, and lysine 793 each participate in a glycyl lysine isopeptide (Lys-Gly) (interchain with G-Cter in SUMO2) cross-link. Serine 805 carries the post-translational modification Phosphoserine. Residues lysine 816 and lysine 838 each participate in a glycyl lysine isopeptide (Lys-Gly) (interchain with G-Cter in SUMO2) cross-link. Threonine 886 bears the Phosphothreonine mark.

Belongs to the krueppel C2H2-type zinc-finger protein family. As to quaternary structure, interacts with NANOG. Associates with the NuRD complex.

Its subcellular location is the nucleus. In terms of biological role, transcription repressor that plays a role in regulation of embryonic stem cells (ESCs) differentiation. Required for ESCs differentiation and acts by mediating autorepression of NANOG in ESCs: binds to the NANOG promoter and promotes association of NANOG protein to its own promoter and recruits the NuRD complex, which deacetylates histones. Not required for establishement and maintenance of ESCs. Represses the transcription of a number of genes including GAST, ODC1 and VIM. Binds to the G-rich box in the enhancer region of these genes. This is Zinc finger protein 281 (Znf281) from Mus musculus (Mouse).